The following is a 580-amino-acid chain: Arrestin domain-containing protein A (580 aa).

N-linked (GlcNAc...) asparagine glycosylation is found at Asn-27, Asn-33, and Asn-60. Residues 31–54 are disordered; that stretch reads NVNTTSSHHHHHSNSGNAEVSFNG. Disordered regions lie at residues 67-86 and 95-114; these read ETHS…EISI and MTMS…HKES. Residues 118 to 138 traverse the membrane as a helical segment; sequence NLSLGGIVGAVVGAVTGGVMI. Asn-149, Asn-341, and Asn-342 each carry an N-linked (GlcNAc...) asparagine glycan. The FYVE-type zinc finger occupies 468–528; it reads DEHATACRKC…VCEECYPIAT (61 aa). Residues Cys-474, Cys-477, Cys-490, Cys-493, Cys-498, Cys-501, Cys-520, and Cys-523 each contribute to the Zn(2+) site.

This sequence belongs to the arrestin family.

It localises to the membrane. This Dictyostelium discoideum (Social amoeba) protein is Arrestin domain-containing protein A (adcA).